A 231-amino-acid chain; its full sequence is tRNA (guanine-N(7)-)-methyltransferase (231 aa).

S-adenosyl-L-methionine is bound by residues glutamate 62, glutamate 87, aspartate 114, and aspartate 136. Aspartate 136 is an active-site residue. Substrate contacts are provided by residues lysine 140, aspartate 172, and threonine 210 to glutamate 213.

The protein belongs to the class I-like SAM-binding methyltransferase superfamily. TrmB family.

The catalysed reaction is guanosine(46) in tRNA + S-adenosyl-L-methionine = N(7)-methylguanosine(46) in tRNA + S-adenosyl-L-homocysteine. Its pathway is tRNA modification; N(7)-methylguanine-tRNA biosynthesis. In terms of biological role, catalyzes the formation of N(7)-methylguanine at position 46 (m7G46) in tRNA. This chain is tRNA (guanine-N(7)-)-methyltransferase, found in Zymomonas mobilis subsp. mobilis (strain ATCC 31821 / ZM4 / CP4).